The primary structure comprises 180 residues: MASTVSAYKEKMKELSVLSLICSCFYSQPHPNTIYQYGDMEVKQLDKRASGQSFEVILKSPSDLSPESPVLSSPPKRKDASLEELQKRLEAAEERRKTQEAQVLKQLAERREHEREVLHKALEENNNFSPLAEEKLNYKMELSKEIREAHLAALRERLREKELHAAEVRRNKEQREEMSG.

2 S-palmitoyl cysteine lipidation sites follow: Cys-22 and Cys-24. The 143-residue stretch at Gly-38 to Gly-180 folds into the SLD domain. Phosphoserine occurs at positions 50, 60, 65, 68, 72, 73, and 81. Residues Leu-58–Ser-81 form a disordered region. Low complexity predominate over residues Ser-60 to Pro-74. Positions Pro-75–Ser-179 form a coiled coil.

It belongs to the stathmin family. In terms of assembly, interacts with STAT3. Interacts with CLU (secreted form); this interaction may act as an important modulator during neuronal differentiation. Post-translationally, N-terminal palmitoylation promotes specific anchoring to the cytosolic leaflet of Golgi membranes and subsequent vesicular trafficking along dendrites and axons. Neuronal Stathmins are substrates for palmitoyltransferases ZDHHC3, ZDHHC7 and ZDHHC15. Neuron specific.

It is found in the golgi apparatus. The protein localises to the cell projection. The protein resides in the growth cone. Its subcellular location is the axon. It localises to the cytoplasm. It is found in the cytosol. Its function is as follows. Exhibits microtubule-destabilizing activity, which is antagonized by STAT3. This chain is Stathmin-3 (Stmn3), found in Rattus norvegicus (Rat).